A 441-amino-acid polypeptide reads, in one-letter code: Chitinase-like protein Idgf3 (441 aa).

A signal peptide spans 1-23 (MSGSLWLSLALSLAVLAQFKVSA). The region spanning 25 to 441 (PNLVCFYDSQ…MLRAIKYRLL (417 aa)) is the GH18 domain. C29 and C56 are disulfide-bonded. Residue N221 is glycosylated (N-linked (GlcNAc...) asparagine). A disordered region spans residues 310–331 (GDSGMPVVSSTQGPAPAGPQSK). C342 and C425 form a disulfide bridge.

This sequence belongs to the glycosyl hydrolase 18 family. IDGF subfamily. In terms of processing, glycosylated.

The protein localises to the secreted. In terms of biological role, cooperates with insulin-like peptides to stimulate the proliferation, polarization and motility of imaginal disk cells. May act by stabilizing the binding of insulin-like peptides to its receptor through a simultaneous interaction with both molecules to form a multiprotein signaling complex. In Drosophila simulans (Fruit fly), this protein is Chitinase-like protein Idgf3 (Idgf3).